The sequence spans 455 residues: uncharacterized protein (455 aa).

11 consecutive transmembrane segments (helical) span residues 26–46 (FGPG…QLLI), 53–73 (GAWG…ISIG), 77–97 (LGVM…RSTA), 111–131 (WVVA…LAVI), 146–166 (ALRA…TGVW), 191–211 (AAGV…SLVV), 232–252 (LTVL…AIAV), 256–276 (AHIG…IPAL), 278–298 (ILAA…LIVG), 323–343 (LLVA…GGGG), and 357–377 (ALVL…VVIA). Positions 384 to 455 (PKRLRPAPPV…LSDEPPPRAD (72 aa)) are disordered.

The protein resides in the cell membrane. This is an uncharacterized protein from Mycobacterium tuberculosis (strain CDC 1551 / Oshkosh).